We begin with the raw amino-acid sequence, 392 residues long: Tryptophan synthase beta chain (392 aa).

Lysine 84 is subject to N6-(pyridoxal phosphate)lysine.

It belongs to the TrpB family. Tetramer of two alpha and two beta chains. The cofactor is pyridoxal 5'-phosphate.

The enzyme catalyses (1S,2R)-1-C-(indol-3-yl)glycerol 3-phosphate + L-serine = D-glyceraldehyde 3-phosphate + L-tryptophan + H2O. Its pathway is amino-acid biosynthesis; L-tryptophan biosynthesis; L-tryptophan from chorismate: step 5/5. Its function is as follows. The beta subunit is responsible for the synthesis of L-tryptophan from indole and L-serine. In Campylobacter jejuni subsp. doylei (strain ATCC BAA-1458 / RM4099 / 269.97), this protein is Tryptophan synthase beta chain.